The chain runs to 164 residues: uncharacterized protein (164 aa).

A signal peptide spans 1 to 22 (MKTNRSLVVIVSLITATLLLTA). Residue Cys23 is the site of N-palmitoyl cysteine attachment. Residue Cys23 is the site of S-diacylglycerol cysteine attachment.

It localises to the cell membrane. This is an uncharacterized protein from Escherichia coli (strain K12).